Reading from the N-terminus, the 234-residue chain is Large ribosomal subunit protein uL1 (234 aa).

This sequence belongs to the universal ribosomal protein uL1 family. In terms of assembly, part of the 50S ribosomal subunit.

Functionally, binds directly to 23S rRNA. The L1 stalk is quite mobile in the ribosome, and is involved in E site tRNA release. In terms of biological role, protein L1 is also a translational repressor protein, it controls the translation of the L11 operon by binding to its mRNA. The polypeptide is Large ribosomal subunit protein uL1 (Syntrophobacter fumaroxidans (strain DSM 10017 / MPOB)).